Consider the following 148-residue polypeptide: Putative lysozyme C-2 (148 aa).

An N-terminal signal peptide occupies residues M1–A18. The 130-residue stretch at K19–V148 folds into the C-type lysozyme domain. 4 cysteine pairs are disulfide-bonded: C24-C146, C48-C134, C83-C99, and C95-C113. Residues E53 and D71 contribute to the active site.

The protein belongs to the glycosyl hydrolase 22 family. As to quaternary structure, monomer.

Its subcellular location is the secreted. It carries out the reaction Hydrolysis of (1-&gt;4)-beta-linkages between N-acetylmuramic acid and N-acetyl-D-glucosamine residues in a peptidoglycan and between N-acetyl-D-glucosamine residues in chitodextrins.. Functionally, lysozymes have primarily a bacteriolytic function; those in tissues and body fluids are associated with the monocyte-macrophage system and enhance the activity of immunoagents. In the intestine they may also have a digestive function. This is Putative lysozyme C-2 (Lyz2) from Rattus norvegicus (Rat).